The chain runs to 147 residues: Large ribosomal subunit protein uL13 (147 aa).

The interval 127–147 (GPEHPHSAQQPKVLEIQGAAR) is disordered.

This sequence belongs to the universal ribosomal protein uL13 family. Part of the 50S ribosomal subunit.

In terms of biological role, this protein is one of the early assembly proteins of the 50S ribosomal subunit, although it is not seen to bind rRNA by itself. It is important during the early stages of 50S assembly. This chain is Large ribosomal subunit protein uL13, found in Verminephrobacter eiseniae (strain EF01-2).